Here is a 288-residue protein sequence, read N- to C-terminus: 33 kDa chaperonin (288 aa).

2 cysteine pairs are disulfide-bonded: Cys-235–Cys-237 and Cys-268–Cys-271.

Belongs to the HSP33 family. In terms of processing, under oxidizing conditions two disulfide bonds are formed involving the reactive cysteines. Under reducing conditions zinc is bound to the reactive cysteines and the protein is inactive.

It is found in the cytoplasm. Redox regulated molecular chaperone. Protects both thermally unfolding and oxidatively damaged proteins from irreversible aggregation. Plays an important role in the bacterial defense system toward oxidative stress. The sequence is that of 33 kDa chaperonin from Streptococcus thermophilus (strain ATCC BAA-491 / LMD-9).